Reading from the N-terminus, the 307-residue chain is tRNA pseudouridine synthase B (307 aa).

Asp38 (nucleophile) is an active-site residue.

This sequence belongs to the pseudouridine synthase TruB family. Type 1 subfamily.

It carries out the reaction uridine(55) in tRNA = pseudouridine(55) in tRNA. Its function is as follows. Responsible for synthesis of pseudouridine from uracil-55 in the psi GC loop of transfer RNAs. This Bacillus cereus (strain ATCC 14579 / DSM 31 / CCUG 7414 / JCM 2152 / NBRC 15305 / NCIMB 9373 / NCTC 2599 / NRRL B-3711) protein is tRNA pseudouridine synthase B.